Here is a 497-residue protein sequence, read N- to C-terminus: NADH-quinone oxidoreductase subunit N (497 aa).

The next 13 membrane-spanning stretches (helical) occupy residues 12-32 (MAPE…DLAL), 40-60 (PLAW…AAMI), 80-100 (AFKF…AEWA), 116-136 (LFAL…TLFV), 166-186 (VING…VFGL), 208-228 (LALA…TVPF), 240-260 (PVPA…ALLL), 284-304 (MQPI…VVAL), 316-336 (SGIA…WAMI), 341-361 (MYLL…AHIV), 383-403 (AAAL…AGFI), 430-450 (TVIS…RPTF), and 457-477 (LPAG…AIGW).

Belongs to the complex I subunit 2 family. In terms of assembly, NDH-1 is composed of 14 different subunits. Subunits NuoA, H, J, K, L, M, N constitute the membrane sector of the complex.

The protein localises to the cell membrane. It catalyses the reaction a quinone + NADH + 5 H(+)(in) = a quinol + NAD(+) + 4 H(+)(out). NDH-1 shuttles electrons from NADH, via FMN and iron-sulfur (Fe-S) centers, to quinones in the respiratory chain. The immediate electron acceptor for the enzyme in this species is believed to be a menaquinone. Couples the redox reaction to proton translocation (for every two electrons transferred, four hydrogen ions are translocated across the cytoplasmic membrane), and thus conserves the redox energy in a proton gradient. This is NADH-quinone oxidoreductase subunit N from Geobacillus kaustophilus (strain HTA426).